Here is a 127-residue protein sequence, read N- to C-terminus: Small ribosomal subunit protein uS11 (127 aa).

The protein belongs to the universal ribosomal protein uS11 family. In terms of assembly, part of the 30S ribosomal subunit. Interacts with proteins S7 and S18. Binds to IF-3.

Located on the platform of the 30S subunit, it bridges several disparate RNA helices of the 16S rRNA. Forms part of the Shine-Dalgarno cleft in the 70S ribosome. The protein is Small ribosomal subunit protein uS11 of Chlorobaculum tepidum (strain ATCC 49652 / DSM 12025 / NBRC 103806 / TLS) (Chlorobium tepidum).